A 301-amino-acid chain; its full sequence is Lipoyl synthase (301 aa).

[4Fe-4S] cluster-binding residues include C50, C55, C61, C76, C80, C83, and S289. The Radical SAM core domain maps to 62–278; sequence WNHRTATFLL…RRYALERGFR (217 aa).

The protein belongs to the radical SAM superfamily. Lipoyl synthase family. Requires [4Fe-4S] cluster as cofactor.

The protein localises to the cytoplasm. The catalysed reaction is [[Fe-S] cluster scaffold protein carrying a second [4Fe-4S](2+) cluster] + N(6)-octanoyl-L-lysyl-[protein] + 2 oxidized [2Fe-2S]-[ferredoxin] + 2 S-adenosyl-L-methionine + 4 H(+) = [[Fe-S] cluster scaffold protein] + N(6)-[(R)-dihydrolipoyl]-L-lysyl-[protein] + 4 Fe(3+) + 2 hydrogen sulfide + 2 5'-deoxyadenosine + 2 L-methionine + 2 reduced [2Fe-2S]-[ferredoxin]. Its pathway is protein modification; protein lipoylation via endogenous pathway; protein N(6)-(lipoyl)lysine from octanoyl-[acyl-carrier-protein]: step 2/2. Its function is as follows. Catalyzes the radical-mediated insertion of two sulfur atoms into the C-6 and C-8 positions of the octanoyl moiety bound to the lipoyl domains of lipoate-dependent enzymes, thereby converting the octanoylated domains into lipoylated derivatives. This chain is Lipoyl synthase, found in Roseiflexus sp. (strain RS-1).